Consider the following 207-residue polypeptide: Large ribosomal subunit protein uL3 (207 aa).

It belongs to the universal ribosomal protein uL3 family. As to quaternary structure, part of the 50S ribosomal subunit. Forms a cluster with proteins L14 and L19.

In terms of biological role, one of the primary rRNA binding proteins, it binds directly near the 3'-end of the 23S rRNA, where it nucleates assembly of the 50S subunit. The chain is Large ribosomal subunit protein uL3 from Fervidobacterium nodosum (strain ATCC 35602 / DSM 5306 / Rt17-B1).